The sequence spans 429 residues: S-adenosylmethionine synthase (429 aa).

Residue Glu9 participates in Mg(2+) binding. His15 contributes to the ATP binding site. Residue Glu43 coordinates K(+). The L-methionine site is built by Glu56 and Gln99. ATP contacts are provided by residues 167–169 (DGK), 235–238 (SGRF), Asp246, 252–253 (RK), Ala269, Lys273, and Lys277. Asp246 is an L-methionine binding site. L-methionine is bound at residue Lys277.

The protein belongs to the AdoMet synthase family. In terms of assembly, homotetramer. Requires Mn(2+) as cofactor. Mg(2+) serves as cofactor. Co(2+) is required as a cofactor. The cofactor is K(+).

It localises to the cytoplasm. It carries out the reaction L-methionine + ATP + H2O = S-adenosyl-L-methionine + phosphate + diphosphate. Its pathway is amino-acid biosynthesis; S-adenosyl-L-methionine biosynthesis; S-adenosyl-L-methionine from L-methionine: step 1/1. Catalyzes the formation of S-adenosylmethionine from methionine and ATP. The reaction comprises two steps that are both catalyzed by the same enzyme: formation of S-adenosylmethionine (AdoMet) and triphosphate, and subsequent hydrolysis of the triphosphate. This is S-adenosylmethionine synthase (SAMS) from Carica papaya (Papaya).